We begin with the raw amino-acid sequence, 395 residues long: Thyroid hormone receptor beta (395 aa).

Residues 1-31 (MSEPAENCSPRWKDEAIQNGYIPSYLDKDEL) form a modulating region. Positions 32, 35, 49, 52, 70, 76, 86, and 89 each coordinate Zn(2+). 2 NR C4-type zinc fingers span residues 32–52 (CVVC…CEGC) and 70–94 (CKYE…FKKC). Positions 32-99 (CVVCGDKATG…RFKKCIAVGM (68 aa)) form a DNA-binding region, nuclear receptor. The NR LBD domain maps to 142–395 (EEWDLIRMVT…PPLFLEVFED (254 aa)). 3 residues coordinate 3,3',5-triiodo-L-thyronine: R216, N265, and H369. L-thyroxine-binding residues include R216, N265, and H369.

The protein belongs to the nuclear hormone receptor family. NR1 subfamily.

The protein resides in the nucleus. In terms of biological role, nuclear hormone receptor that can act as a repressor or activator of transcription. High affinity receptor for thyroid hormones, including triiodothyronine and thyroxine. The protein is Thyroid hormone receptor beta (thrb) of Paralichthys olivaceus (Bastard halibut).